We begin with the raw amino-acid sequence, 1633 residues long: D-lysergyl-peptide-synthetase subunit 3 (1633 aa).

The segment at 80 to 483 is adenylation (A) domain; that stretch reads FRQRCDLHPD…GRKDSQIKIR (404 aa). A Carrier domain is found at 622 to 691; it reads EEHRLQRMYS…RLKDLARKAS (70 aa). At Ser654 the chain carries O-(pantetheine 4'-phosphoryl)serine. A condensation (C) domain region spans residues 836 to 1127; sequence PLVRMKLVEG…ILGQIHGKEA (292 aa). The segment at 1256–1483 is reductase (R) domain; the sequence is VTGASGFIGT…EYNSSAGSEW (228 aa).

Belongs to the NRP synthetase family.

The protein operates within alkaloid biosynthesis; ergot alkaloid biosynthesis. In terms of biological role, D-lysergyl-peptide-synthetase subunit 3; part of the gene cluster that mediates the biosynthesis of fungal ergot alkaloid. DmaW catalyzes the first step of ergot alkaloid biosynthesis by condensing dimethylallyl diphosphate (DMAP) and tryptophan to form 4-dimethylallyl-L-tryptophan. The second step is catalyzed by the methyltransferase easF that methylates 4-dimethylallyl-L-tryptophan in the presence of S-adenosyl-L-methionine, resulting in the formation of 4-dimethylallyl-L-abrine. The catalase easC and the FAD-dependent oxidoreductase easE then transform 4-dimethylallyl-L-abrine to chanoclavine-I which is further oxidized by easD in the presence of NAD(+), resulting in the formation of chanoclavine-I aldehyde. Agroclavine dehydrogenase easG then mediates the conversion of chanoclavine-I aldehyde to agroclavine via a non-enzymatic adduct reaction: the substrate is an iminium intermediate that is formed spontaneously from chanoclavine-I aldehyde in the presence of glutathione. The presence of easA is not required to complete this reaction. Further conversion of agroclavine to paspalic acid is a two-step process involving oxidation of agroclavine to elymoclavine and of elymoclavine to paspalic acid, the second step being performed by the elymoclavine oxidase cloA. Paspalic acid is then further converted to D-lysergic acid. Ergopeptines are assembled from D-lysergic acid and three different amino acids by the D-lysergyl-peptide-synthetases composed each of a monomudular and a trimodular nonribosomal peptide synthetase subunit. LpsB and lpsC encode the monomodular subunits responsible for D-lysergic acid activation and incorporation into the ergopeptine backbone. LpsA1 and A2 subunits encode the trimodular nonribosomal peptide synthetase assembling the tripeptide portion of ergopeptines. LpsA1 is responsible for formation of the major ergopeptine, ergotamine, and lpsA2 for alpha-ergocryptine, the minor ergopeptine of the total alkaloid mixture elaborated by C.purpurea. D-lysergyl-tripeptides are assembled by the nonribosomal peptide synthetases and released as N-(D-lysergyl-aminoacyl)-lactams. Cyclolization of the D-lysergyl-tripeptides is performed by the Fe(2+)/2-ketoglutarate-dependent dioxygenase easH which introduces a hydroxyl group into N-(D-lysergyl-aminoacyl)-lactam at alpha-C of the aminoacyl residue followed by spontaneous condensation with the terminal lactam carbonyl group. This is D-lysergyl-peptide-synthetase subunit 3 from Claviceps purpurea (Ergot fungus).